We begin with the raw amino-acid sequence, 219 residues long: Sporamin A (219 aa).

A signal peptide spans 1–23; the sequence is MKALTLALFLALSLYLLPNPAHS.

This sequence belongs to the protease inhibitor I3 (leguminous Kunitz-type inhibitor) family. Accumulates specifically in tuberous roots and tubers upon tuberization. Sporamin accounts 60 to 80% of the total soluble protein of the organ.

The protein resides in the vacuole. Major tuberous root protein. This chain is Sporamin A (GSPO-A1), found in Ipomoea batatas (Sweet potato).